Reading from the N-terminus, the 436-residue chain is MPKPVIAIVGRPNVGKSTIFNRIVGERVSIVEDIPGVTRDRIYSAGEWLNHEFNIIDTGGIDIGDEPFLTQIRQQAEVAIDEADVIIFMTNGRDGVTAADEEVAKILYRSNKPVVLAVNKVDNPEMRSDIYDFYALGFGEPFPISGTHGLGLGDLLDEAAQHFPKIEEDGYDEDTIRFSLIGRPNVGKSSLVNALLGQERVIVSNVAGTTRDAVDTPYSKDGKDYVIIDTAGMRKKGKVYESTEKYSVLRALRAIERSDVVLVVLDGEEGIIEQDKKIAGYAHDSGRAVVIVVNKWDAVKKDEKTMKAFEENIRAHFQFLEYAPIVFLSAKTRKRTQTLIPVIDEVNESHSIRIQTNVLNDVIMDAVAMNPTPTHNGSRLKIFYATQVAVKPPTFVVFVNDPELLHFSYERFLKNRLRESFGFVGTPIHIIARARD.

EngA-type G domains lie at 4–167 (PVIA…PKIE) and 176–351 (IRFS…ESHS). GTP contacts are provided by residues 10–17 (GRPNVGKS), 57–61 (DTGGI), 119–122 (NKVD), 182–189 (GRPNVGKS), 229–233 (DTAGM), and 294–297 (NKWD). Residues 352 to 436 (IRIQTNVLND…PIHIIARARD (85 aa)) form the KH-like domain.

The protein belongs to the TRAFAC class TrmE-Era-EngA-EngB-Septin-like GTPase superfamily. EngA (Der) GTPase family. Associates with the 50S ribosomal subunit.

In terms of biological role, GTPase that plays an essential role in the late steps of ribosome biogenesis. The chain is GTPase Der from Bacillus anthracis (strain A0248).